Here is a 69-residue protein sequence, read N- to C-terminus: Mitotic-spindle organizing protein 1 (69 aa).

The protein belongs to the MOZART1 family. In terms of assembly, part of the gamma-tubulin complex.

It localises to the cytoplasm. The protein resides in the cytoskeleton. The protein localises to the microtubule organizing center. It is found in the spindle. In terms of biological role, required for gamma-tubulin complex recruitment to the microtubule organizing centers (MTOCs). The sequence is that of Mitotic-spindle organizing protein 1 from Picea sitchensis (Sitka spruce).